The following is a 366-amino-acid chain: GTP-binding protein 10 (366 aa).

One can recognise an Obg domain in the interval 13-148; that stretch reads GNFIDNLRIF…RIVHLDLKVI (136 aa). In terms of domain architecture, OBG-type G spans 149–344; it reads ADVGLVGFPN…LKSCIRKALD (196 aa). Residues 155–162, 202–206, and 278–281 contribute to the GTP site; these read GFPNAGKS, DLPGL, and NKMD. Over residues 346–355 the composition is skewed to basic and acidic residues; sequence QDGKESDAHR. Positions 346-366 are disordered; the sequence is QDGKESDAHRSKQLLNLQSSS.

This sequence belongs to the TRAFAC class OBG-HflX-like GTPase superfamily. OBG GTPase family.

It is found in the nucleus. It localises to the nucleolus. Functionally, may be involved in the ribosome maturation process. The sequence is that of GTP-binding protein 10 (Gtpbp10) from Mus musculus (Mouse).